The primary structure comprises 98 residues: NADH-ubiquinone oxidoreductase chain 4L (98 aa).

A run of 3 helical transmembrane segments spans residues 1-21 (MAPI…GVLI), 28-48 (STLL…TLLI), and 59-79 (APLI…ALLV).

This sequence belongs to the complex I subunit 4L family. Core subunit of respiratory chain NADH dehydrogenase (Complex I) which is composed of 45 different subunits.

The protein localises to the mitochondrion inner membrane. It carries out the reaction a ubiquinone + NADH + 5 H(+)(in) = a ubiquinol + NAD(+) + 4 H(+)(out). Functionally, core subunit of the mitochondrial membrane respiratory chain NADH dehydrogenase (Complex I) which catalyzes electron transfer from NADH through the respiratory chain, using ubiquinone as an electron acceptor. Part of the enzyme membrane arm which is embedded in the lipid bilayer and involved in proton translocation. The chain is NADH-ubiquinone oxidoreductase chain 4L (MT-ND4L) from Isoodon macrourus (Short-nosed bandicoot).